We begin with the raw amino-acid sequence, 465 residues long: Branchpoint-bridging protein (465 aa).

The segment covering 1–11 has biased composition (basic and acidic residues); sequence MSERREEERGR. The disordered stretch occupies residues 1-22; that stretch reads MSERREEERGRTGFSMKKNHNS. Positions 139-205 constitute a KH domain; sequence YIPVSQYPQI…DFSDPLHCLI (67 aa). CCHC-type zinc fingers lie at residues 257 to 274 and 282 to 299; these read RPCA…ECPH and IICR…DCTS. Disordered stretches follow at residues 324–391 and 431–465; these read AVDQ…LSHQ and INDV…PGLN. Polar residues-rich tracts occupy residues 339–361 and 377–391; these read RNHN…NKRA and QINP…LSHQ.

Belongs to the BBP/SF1 family.

The protein localises to the nucleus. Functionally, necessary for the splicing of pre-mRNA. Has a role in the recognition of the branch site (5'-UACUAAC-3'), the pyrimidine tract and the 3'-splice site at the 3'-end of introns. This is Branchpoint-bridging protein (BBP) from Candida glabrata (strain ATCC 2001 / BCRC 20586 / JCM 3761 / NBRC 0622 / NRRL Y-65 / CBS 138) (Yeast).